Consider the following 353-residue polypeptide: Photosystem II protein D1 (353 aa).

Thr2 carries the post-translational modification N-acetylthreonine. A Phosphothreonine modification is found at Thr2. Helical transmembrane passes span Tyr29–Ser46, His118–Leu133, and Trp142–Ala156. Chlorophyll a is bound at residue His118. Tyr126 is a binding site for pheophytin a. [CaMn4O5] cluster contacts are provided by Asp170 and Glu189. Residues Phe197–Leu218 traverse the membrane as a helical segment. Chlorophyll a is bound at residue His198. A quinone is bound by residues His215 and Ser264–Phe265. His215 provides a ligand contact to Fe cation. Residue His272 coordinates Fe cation. A helical transmembrane segment spans residues Phe274–Leu288. [CaMn4O5] cluster-binding residues include His332, Glu333, Asp342, and Ala344. The propeptide occupies Ala345 to Gly353.

This sequence belongs to the reaction center PufL/M/PsbA/D family. In terms of assembly, PSII is composed of 1 copy each of membrane proteins PsbA, PsbB, PsbC, PsbD, PsbE, PsbF, PsbH, PsbI, PsbJ, PsbK, PsbL, PsbM, PsbT, PsbX, PsbY, PsbZ, Psb30/Ycf12, at least 3 peripheral proteins of the oxygen-evolving complex and a large number of cofactors. It forms dimeric complexes. Requires The D1/D2 heterodimer binds P680, chlorophylls that are the primary electron donor of PSII, and subsequent electron acceptors. It shares a non-heme iron and each subunit binds pheophytin, quinone, additional chlorophylls, carotenoids and lipids. D1 provides most of the ligands for the Mn4-Ca-O5 cluster of the oxygen-evolving complex (OEC). There is also a Cl(-1) ion associated with D1 and D2, which is required for oxygen evolution. The PSII complex binds additional chlorophylls, carotenoids and specific lipids. as cofactor. In terms of processing, tyr-161 forms a radical intermediate that is referred to as redox-active TyrZ, YZ or Y-Z. Post-translationally, C-terminally processed by CTPA; processing is essential to allow assembly of the oxygen-evolving complex and thus photosynthetic growth.

The protein localises to the plastid. It is found in the chloroplast thylakoid membrane. The catalysed reaction is 2 a plastoquinone + 4 hnu + 2 H2O = 2 a plastoquinol + O2. Functionally, photosystem II (PSII) is a light-driven water:plastoquinone oxidoreductase that uses light energy to abstract electrons from H(2)O, generating O(2) and a proton gradient subsequently used for ATP formation. It consists of a core antenna complex that captures photons, and an electron transfer chain that converts photonic excitation into a charge separation. The D1/D2 (PsbA/PsbD) reaction center heterodimer binds P680, the primary electron donor of PSII as well as several subsequent electron acceptors. The polypeptide is Photosystem II protein D1 (Nicotiana debneyi (Debney's tobacco)).